We begin with the raw amino-acid sequence, 161 residues long: Probable chemoreceptor glutamine deamidase CheD (161 aa).

This sequence belongs to the CheD family.

It carries out the reaction L-glutaminyl-[protein] + H2O = L-glutamyl-[protein] + NH4(+). In terms of biological role, probably deamidates glutamine residues to glutamate on methyl-accepting chemotaxis receptors (MCPs), playing an important role in chemotaxis. This Thermococcus kodakarensis (strain ATCC BAA-918 / JCM 12380 / KOD1) (Pyrococcus kodakaraensis (strain KOD1)) protein is Probable chemoreceptor glutamine deamidase CheD.